The sequence spans 354 residues: Protein C42 (354 aa).

The Nuclear localization signal motif lies at 349–352; that stretch reads KRKK.

This sequence belongs to the baculoviridae C42 protein family.

It localises to the host nucleus. In Orgyia pseudotsugata (Douglas-fir tussock moth), this protein is Protein C42.